Consider the following 449-residue polypeptide: Tubulin alpha-2 chain (449 aa).

Residues glutamine 11, glutamate 71, serine 140, glycine 144, threonine 145, threonine 179, asparagine 206, and asparagine 228 each coordinate GTP. Residue glutamate 71 participates in Mg(2+) binding. Glutamate 254 is an active-site residue.

It belongs to the tubulin family. As to quaternary structure, dimer of alpha and beta chains. A typical microtubule is a hollow water-filled tube with an outer diameter of 25 nm and an inner diameter of 15 nM. Alpha-beta heterodimers associate head-to-tail to form protofilaments running lengthwise along the microtubule wall with the beta-tubulin subunit facing the microtubule plus end conferring a structural polarity. Microtubules usually have 13 protofilaments but different protofilament numbers can be found in some organisms and specialized cells. The cofactor is Mg(2+).

Its subcellular location is the cytoplasm. The protein resides in the cytoskeleton. The catalysed reaction is GTP + H2O = GDP + phosphate + H(+). Functionally, tubulin is the major constituent of microtubules, a cylinder consisting of laterally associated linear protofilaments composed of alpha- and beta-tubulin heterodimers. Microtubules grow by the addition of GTP-tubulin dimers to the microtubule end, where a stabilizing cap forms. Below the cap, tubulin dimers are in GDP-bound state, owing to GTPase activity of alpha-tubulin. The polypeptide is Tubulin alpha-2 chain (tub1) (Schizosaccharomyces pombe (strain 972 / ATCC 24843) (Fission yeast)).